We begin with the raw amino-acid sequence, 216 residues long: Ephrin-A1 (216 aa).

The first 28 residues, 1-28 (MMELYRAAVQLIVGVGLGVGLWLREAQG), serve as a signal peptide directing secretion. The region spanning 29–161 (ERHIVFWNSS…RLRVHVSGRT (133 aa)) is the Ephrin RBD domain. Asn36 carries an N-linked (GlcNAc...) asparagine glycan. Cysteines 61 and 102 form a disulfide. Residues 162-181 (TPPPVNVHTPRSHIQSDEPE) form a disordered region. Ser195 carries the GPI-anchor amidated serine lipid modification. A propeptide spans 196–216 (AAPGTPCTLYGLLLAALLLRL) (removed in mature form).

This sequence belongs to the ephrin family. In terms of assembly, binds to the receptor tyrosine kinases EPHA2, EPHA4, EPHA5, EPHA6 and EPHA7. Also binds with low affinity to EPHA1.

The protein resides in the membrane. Functionally, cell surface GPI-bound ligand for Eph receptors, a family of receptor tyrosine kinases which are crucial for migration, repulsion and adhesion during neuronal, vascular and epithelial development. Binds promiscuously Eph receptors residing on adjacent cells, leading to contact-dependent bidirectional signaling into neighboring cells. This Xenopus laevis (African clawed frog) protein is Ephrin-A1 (efna1).